Here is a 265-residue protein sequence, read N- to C-terminus: Upstream stimulatory factor (265 aa).

Basic and acidic residues predominate over residues 1–18; the sequence is MDVQDHTLDQGPQDKDKD. 2 disordered regions span residues 1–21 and 119–149; these read MDVQDHTLDQGPQDKDKDLEE and ASAAIPGDGAGPASGGEQQPGITQPSGAAGG. Polar residues predominate over residues 134–144; it reads GEQQPGITQPS. Residues 190 to 245 enclose the bHLH domain; the sequence is RRRATHNEVERRRRDKINNWIVKLSKIIPDCNIDHSKQGQSKGGILTKTCDYIHDL.

As to quaternary structure, efficient DNA binding requires dimerization with another bHLH protein. Binds DNA as a homodimer or a heterodimer. Enriched in ectodermal tissue.

It localises to the nucleus. In terms of biological role, may act as a transcription factor which recognizes the CACGTG motif on SPEC gene promoters. The protein is Upstream stimulatory factor of Strongylocentrotus purpuratus (Purple sea urchin).